The following is a 405-amino-acid chain: Imidazolonepropionase (405 aa).

Positions 72 and 74 each coordinate Fe(3+). Histidine 72 and histidine 74 together coordinate Zn(2+). 4-imidazolone-5-propanoate is bound by residues arginine 81, tyrosine 144, and histidine 177. Residue tyrosine 144 participates in N-formimidoyl-L-glutamate binding. Histidine 242 provides a ligand contact to Fe(3+). Zn(2+) is bound at residue histidine 242. Glutamine 245 contacts 4-imidazolone-5-propanoate. Position 317 (aspartate 317) interacts with Fe(3+). Aspartate 317 provides a ligand contact to Zn(2+). N-formimidoyl-L-glutamate is bound by residues asparagine 319 and glycine 321. Threonine 322 serves as a coordination point for 4-imidazolone-5-propanoate.

This sequence belongs to the metallo-dependent hydrolases superfamily. HutI family. Zn(2+) is required as a cofactor. The cofactor is Fe(3+).

The protein resides in the cytoplasm. It catalyses the reaction 4-imidazolone-5-propanoate + H2O = N-formimidoyl-L-glutamate. Its pathway is amino-acid degradation; L-histidine degradation into L-glutamate; N-formimidoyl-L-glutamate from L-histidine: step 3/3. Its function is as follows. Catalyzes the hydrolytic cleavage of the carbon-nitrogen bond in imidazolone-5-propanoate to yield N-formimidoyl-L-glutamate. It is the third step in the universal histidine degradation pathway. This Klebsiella pneumoniae subsp. pneumoniae (strain ATCC 700721 / MGH 78578) protein is Imidazolonepropionase.